The following is a 68-amino-acid chain: MPKLKTKSAVKKRFKLTASGKVIASQAGKKHFMRRRTKAQIRNLRGTTILCPQDRYNIKKYFLPYGIN.

Belongs to the bacterial ribosomal protein bL35 family.

The protein is Large ribosomal subunit protein bL35 of Rickettsia conorii (strain ATCC VR-613 / Malish 7).